Here is a 265-residue protein sequence, read N- to C-terminus: Bradykinin-potentiating and C-type natriuretic peptides (265 aa).

A signal peptide spans 1 to 23 (MVLSRLAASGLLLLALLALSVDG). Residues 24–30 (KPVQQWA) constitute a propeptide that is removed on maturation. At Gln-31 the chain carries Pyrrolidone carboxylic acid. Residues 44-50 (LKVQQWA) constitute a propeptide that is removed on maturation. Residue Gln-51 is modified to Pyrrolidone carboxylic acid. Residues 64–70 (LTVQQWA) constitute a propeptide that is removed on maturation. Pyrrolidone carboxylic acid is present on Gln-71. Positions 81–87 (LTVQQWA) are excised as a propeptide. A Pyrrolidone carboxylic acid modification is found at Gln-88. The propeptide occupies 100–106 (LEVQQWA). The residue at position 107 (Gln-107) is a Pyrrolidone carboxylic acid. The propeptide occupies 118 to 120 (APL). Gln-121 carries the post-translational modification Pyrrolidone carboxylic acid. Residue Val-126 is a propeptide. Gln-127 carries the post-translational modification Pyrrolidone carboxylic acid. A propeptide spanning residues 132–241 (LLQPHESPAS…GGARRLKGLA (110 aa)) is cleaved from the precursor. The tract at residues 153–211 (GPEAASGVPSAGAEVGRSGSKAPAAPHRLSKSKGAAATSAASRPMRDLRPDGKQARQNW) is disordered. Residues 184 to 194 (SKGAAATSAAS) are compositionally biased toward low complexity. Basic and acidic residues predominate over residues 196–206 (PMRDLRPDGKQ). Cys-249 and Cys-265 are oxidised to a cystine.

In the N-terminal section; belongs to the bradykinin-potentiating peptide family. The protein in the C-terminal section; belongs to the natriuretic peptide family. Expressed by the venom gland.

Its subcellular location is the secreted. The protein localises to the cytoplasm. It localises to the cytosol. In terms of biological role, modestly inhibits ACE (with highest affinity for the N-site) and reveals strong bradykinin-potentiating activity. Induces nitric oxide (NO) production depended on muscarinic acetylcholine receptor M1 subtype (CHRM1) and bradykinin B2 receptor (BDKRB2) activation. Both these receptors contribute to the vasodilation induced by this peptide that may have an indirect action on BDKRB2 and a direct agonistic action on CHRM1. Its function is as follows. Peptide with several activities. It inhibits the activity of the angiotensin-converting enzyme (ACE) by a preferential interaction with its C-domain. It evokes transient hypotension (-14 mmHg) similar to that evoked by 0.5 ug of bradykinin, when injected alone into rats. It has a high bradykinin-potentiating effect (120%), when 60 nmol of BPP-10c are coinjected with 0.5 ug of bradykinin into rats. Does not affect angiotensin-1 pressor effects. Shows potent and long-lasting antihypertensive activity as well as a reduction of the heart rate. It also binds and dose-dependently promotes the activation of cytosolic argininosuccinate synthase (ASS1), an enzyme that catalyzes the conversion of citrulline, L-aspartate and ATP to argininosuccinate, AMP and pyrophosphate. It also enhances ASS1-dependent arginine production in HEK 293 cells, as well as in spontaneous hypertensive rat (SHR) and Wistar rat plasma. In addition, it induces the production of nitric-oxide (NO) by HUVEC cells via the endothelial nitric-oxide synthase (NOS3), which use arginine as a substrate and produce NO. It has been shown to be internalized by ASS1-expressing endothelial (HUVEC) and kidney (HEK 293) cells, and is detected homogenously distributed within the cell cytoplasm for up to 2 hours. Functionally, has a vasorelaxant activity in rat aortic strips and a diuretic potency in anesthetized rats. May act by activating natriuretic receptors (NPR1 and/or NPR2). This chain is Bradykinin-potentiating and C-type natriuretic peptides, found in Bothrops insularis (Golden lancehead).